A 1679-amino-acid polypeptide reads, in one-letter code: AF4/FMR2 family member lilli (1679 aa).

Disordered stretches follow at residues 1-21, 55-78, 124-305, 406-539, 580-609, 733-755, 783-1172, and 1197-1319; these read MAQQ…SSIN, NYNM…QQGI, RSAP…EKDV, LHQL…GAQN, MGAG…SNKW, DSGT…AVGG, QPTQ…TTPH, and TPAQ…LQIG. Positions 69–78 are enriched in basic and acidic residues; the sequence is REKIERQQGI. Composition is skewed to low complexity over residues 144–181 and 212–244; these read SLGH…QQQQ and PSSS…SSGG. Threonine 421 bears the Phosphothreonine mark. Positions 429–442 are enriched in basic and acidic residues; it reads LKTEKNHSLEKQDS. Residues 444–455 show a composition bias toward acidic residues; that stretch reads LENDLELSESED. 2 positions are modified to phosphoserine: serine 451 and serine 453. Residues 464-484 are compositionally biased toward low complexity; sequence SAGNSSNSSESDSSESGSESS. Positions 492–501 are enriched in basic residues; that stretch reads HPNHQQHHHQ. Residues 502 to 532 are compositionally biased toward low complexity; the sequence is LQQQQQQQQQQASMQQQQVLQQQQQHRPQPL. Over residues 582-591 the composition is skewed to gly residues; the sequence is AGSGSGGTLS. The span at 598-609 shows a compositional bias: polar residues; that stretch reads NKTPSPTESNKW. Positions 733-752 are enriched in low complexity; the sequence is DSGTSASGSSSSSSSSSDSA. Polar residues predominate over residues 783–796; the sequence is QPTQSQKAPPSNSV. The span at 810 to 820 shows a compositional bias: basic residues; that stretch reads QRQKKPRKKKA. Serine 829 and serine 830 each carry phosphoserine. The a.T hook DNA-binding region spans 859-871; sequence KKGRGRPRKQQQS. The segment covering 868-906 has biased composition (low complexity); that stretch reads QQQSGGSGNLSSASAGSSSQTKGPTLTAAKKPLAKTPLA. Phosphoserine is present on residues serine 879 and serine 881. The segment covering 917-927 has biased composition (polar residues); that stretch reads SQSSSNGNTPT. Low complexity-rich tracts occupy residues 957-973 and 1001-1012; these read SSSA…SSSS and GSGSSSPSSSGS. Over residues 1019 to 1030 the composition is skewed to polar residues; that stretch reads TRSQVGSGQALA. The span at 1042–1068 shows a compositional bias: low complexity; that stretch reads SQHSQHLSSSECSSSSGGCTAVCSSSS. Residues 1073-1090 are compositionally biased toward basic and acidic residues; it reads EGRREKERERKPKSDKNK. The span at 1130 to 1140 shows a compositional bias: pro residues; it reads QPPPPQAPPAA. The segment covering 1198-1213 has biased composition (polar residues); that stretch reads PAQQNGHLTPKDQATN. 2 stretches are compositionally biased toward basic and acidic residues: residues 1234 to 1251 and 1260 to 1288; these read EHPV…EAKF and FQLK…EQPP. Position 1368 is a phosphoserine (serine 1368). Residue threonine 1370 is modified to Phosphothreonine. Low complexity predominate over residues 1569–1589; that stretch reads GNTPSSISPSNSVGSQGSGSN. A disordered region spans residues 1569–1594; it reads GNTPSSISPSNSVGSQGSGSNTPPGR.

Belongs to the AF4 family.

The protein resides in the nucleus. In terms of biological role, has a role in transcriptional regulation. Acts in parallel with the Ras/MAPK and the PI3K/PKB pathways in the control of cell identity and cellular growth. Essential for regulation of the cytoskeleton and cell growth but not for cell proliferation or growth rate. Required specifically for the microtubule-based basal transport of lipid droplets. Plays a partially redundant function downstream of Raf in cell fate specification in the developing eye. Pair-rule protein that regulates embryonic cellularization, gastrulation and segmentation. In Drosophila erecta (Fruit fly), this protein is AF4/FMR2 family member lilli.